The primary structure comprises 909 residues: GTPase activating protein homolog 4 (909 aa).

In terms of domain architecture, F-BAR spans 1–257 (MASLIGSAKL…PTPDFQFESC (257 aa)). One can recognise a Rho-GAP domain in the interval 322–513 (IPIEEIMFKQ…LIIEGYLKLS (192 aa)). The segment at 529–909 (IPSFSNNNNN…QRVPPPPSQS (381 aa)) is disordered. 2 stretches are compositionally biased toward low complexity: residues 533–562 (SNNNNNSTTTTTTTTTTTVPSSTSTNITTN) and 571–602 (SSTTPLPSLTTFSQSQSSSPPNQPSPSITPQQ). Pro residues predominate over residues 609–625 (SYQPPQPPPTMAPPPLF). The segment covering 651–674 (QYTQSSSNLPPIQLGVTNSPSKPQ) has biased composition (polar residues). A coiled-coil region spans residues 672 to 809 (KPQLSDKQKE…QQLQQQSNGS (138 aa)). Positions 675–716 (LSDKQKEKEKEKEKEKEKEKEREKEKEKEKEKEKEKEKEKEK) are enriched in basic and acidic residues. The segment covering 723–741 (SSSTSPNSSSLSISNFLSS) has biased composition (low complexity). Basic and acidic residues predominate over residues 742–765 (NKDKDKEKDKEKEKEKEKEKDKEI). Residues 767-785 (ATNSTPEKPVSNRMSLIFS) show a composition bias toward polar residues. Composition is skewed to low complexity over residues 786 to 828 (QQLQ…MSPS) and 843 to 892 (SGTS…ELKS).

It localises to the cytoplasm. Its subcellular location is the contractile vacuole. Rho GTPase-activating protein involved in the signal transduction pathway. This is GTPase activating protein homolog 4 (mgp4) from Dictyostelium discoideum (Social amoeba).